Consider the following 377-residue polypeptide: SH2/SH3 adapter protein NCK1 (377 aa).

Ala2 is modified (N-acetylalanine). The SH3 1 domain maps to 2 to 61 (AEEVVVVAKFDYVAQQEQELDIKKNERLWLLDDSKSWWRVRNSMNKTGFVPSNYVERKNS). Phosphoserine occurs at positions 85, 89, 91, and 96. Tyr105 bears the Phosphotyrosine mark. The SH3 2 domain maps to 106-165 (DLNMPAYVKFNYMAEREDELSLIKGTKVIVMEKCSDGWWRGSYNGQVGWFPSNYVTEEGD). A Phosphoserine modification is found at Ser166. Positions 190–252 (QVLHVVQALY…PKNYVTVMQN (63 aa)) constitute an SH3 3 domain. Residues 282 to 376 (WYYGKVTRHQ…GEKLYLVKHL (95 aa)) enclose the SH2 domain.

In terms of assembly, interacts (via SH2 domain and SH3 domain 2) with EGFR. Interacts with PAK1 and SOS1. Interacts (via SH3 domains) with PKN2. Associates with BLNK, PLCG1, VAV1 and NCK1 in a B-cell antigen receptor-dependent fashion. Interacts with SOCS7. This interaction is required for nuclear import. Part of a complex containing PPP1R15B, PP1 and NCK1. Interacts with RALGPS1. Interacts with CAV2 (tyrosine phosphorylated form). Interacts with ADAM15. Interacts with FASLG. Directly interacts with RASA1. Interacts with isoform 4 of MINK1. Interacts with FLT1 (tyrosine phosphorylated). Interacts with KDR (tyrosine phosphorylated). Interacts (via SH2 domain) with EPHB1; activates the JUN cascade to regulate cell adhesion. Interacts with EPHA2. Interacts (via SH2 domain) with PDGFRB (tyrosine phosphorylated). Interacts with the inactive form of EIF2AK2/PKR. Interacts with PTPN1. Interacts with INSR/insulin receptor (in response to insulin stimulation); This interaction may mediate PTPN1 recruitment leading to INSR dephosphorylation. Interacts with IRS1. Phosphorylated on Ser and Tyr residues. Phosphorylated in response to activation of EGFR and FcERI. Phosphorylated by activated PDGFRB.

It localises to the cytoplasm. The protein resides in the endoplasmic reticulum. Its subcellular location is the nucleus. In terms of biological role, adapter protein which associates with tyrosine-phosphorylated growth factor receptors, such as KDR and PDGFRB, or their cellular substrates. Maintains low levels of EIF2S1 phosphorylation by promoting its dephosphorylation by PP1. Plays a role in the DNA damage response, not in the detection of the damage by ATM/ATR, but for efficient activation of downstream effectors, such as that of CHEK2. Plays a role in ELK1-dependent transcriptional activation in response to activated Ras signaling. Modulates the activation of EIF2AK2/PKR by dsRNA. May play a role in cell adhesion and migration through interaction with ephrin receptors. The polypeptide is SH2/SH3 adapter protein NCK1 (NCK1) (Homo sapiens (Human)).